The chain runs to 420 residues: Dachshund homolog dac-1 (420 aa).

The disordered stretch occupies residues 23–77; the sequence is PSSSSSSSNNSSSNTSSSNFLSPYEYQESSTSPRDTTDSSGESSLSSSGSSSSLN. 2 stretches are compositionally biased toward low complexity: residues 24–41 and 51–77; these read SSSSSSSNNSSSNTSSSN and SSTSPRDTTDSSGESSLSSSGSSSSLN. Positions 85–171 are DACHbox-N; that stretch reads KLIKFRGHNV…LLKTSDFEKL (87 aa). Residues 242–258 show a composition bias toward basic and acidic residues; sequence NSFERADDDDQNQRDAD. The disordered stretch occupies residues 242-321; sequence NSFERADDDD…SSSSSGKNDE (80 aa). Positions 263 to 273 are enriched in polar residues; it reads LNLSKSGGNSE. Positions 297–317 are enriched in low complexity; the sequence is GGSNSNSLSMSMEAGSSSSSG.

The protein belongs to the DACH/dachshund family. In terms of tissue distribution, expressed in AFD, AWC, ASE and ASK neurons. Expressed in the alae.

The protein resides in the nucleus. In terms of biological role, transcription factor. Plays a role in the thermotactic response. The sequence is that of Dachshund homolog dac-1 from Caenorhabditis elegans.